A 35-amino-acid polypeptide reads, in one-letter code: Photosystem II reaction center protein T (35 aa).

The helical transmembrane segment at 3 to 23 (ALVYTFLLVSTLGIIFFAIFF) threads the bilayer.

It belongs to the PsbT family. PSII is composed of 1 copy each of membrane proteins PsbA, PsbB, PsbC, PsbD, PsbE, PsbF, PsbH, PsbI, PsbJ, PsbK, PsbL, PsbM, PsbT, PsbY, PsbZ, Psb30/Ycf12, at least 3 peripheral proteins of the oxygen-evolving complex and a large number of cofactors. It forms dimeric complexes.

It localises to the plastid. The protein localises to the chloroplast thylakoid membrane. Its function is as follows. Found at the monomer-monomer interface of the photosystem II (PS II) dimer, plays a role in assembly and dimerization of PSII. PSII is a light-driven water plastoquinone oxidoreductase, using light energy to abstract electrons from H(2)O, generating a proton gradient subsequently used for ATP formation. This Pinus thunbergii (Japanese black pine) protein is Photosystem II reaction center protein T.